The following is a 917-amino-acid chain: Protein translocase subunit SecA 1 (917 aa).

ATP contacts are provided by residues Q87, G105 to T109, and D507. The disordered stretch occupies residues E866–N917. 4 residues coordinate Zn(2+): C901, C903, C912, and H913. A compositionally biased stretch (basic residues) spans K907–N917.

Belongs to the SecA family. As to quaternary structure, monomer and homodimer. Part of the essential Sec protein translocation apparatus which comprises SecA, SecYEG and auxiliary proteins SecDF-YajC and YidC. Zn(2+) is required as a cofactor.

It is found in the cell inner membrane. Its subcellular location is the cytoplasm. The catalysed reaction is ATP + H2O + cellular proteinSide 1 = ADP + phosphate + cellular proteinSide 2.. Functionally, part of the Sec protein translocase complex. Interacts with the SecYEG preprotein conducting channel. Has a central role in coupling the hydrolysis of ATP to the transfer of proteins into and across the cell membrane, serving both as a receptor for the preprotein-SecB complex and as an ATP-driven molecular motor driving the stepwise translocation of polypeptide chains across the membrane. This is Protein translocase subunit SecA 1 from Nitrosospira multiformis (strain ATCC 25196 / NCIMB 11849 / C 71).